A 381-amino-acid chain; its full sequence is Creatine kinase B-type (381 aa).

Ser4 bears the Phosphoserine mark. The Phosphagen kinase N-terminal domain maps to 11 to 98 (KLRFPAEDEF…FDPIIEDRHG (88 aa)). At Thr35 the chain carries Phosphothreonine. Lys45 participates in a covalent cross-link: Glycyl lysine isopeptide (Lys-Gly) (interchain with G-Cter in ubiquitin). Val72 contacts creatine. Over residues 96–110 (RHGGYKPSDEHKTDL) the composition is skewed to basic and acidic residues. Residues 96 to 123 (RHGGYKPSDEHKTDLNPDNLQGGDDLDP) are disordered. Residues Lys101 and Lys107 each participate in a glycyl lysine isopeptide (Lys-Gly) (interchain with G-Cter in ubiquitin) cross-link. Residue Tyr125 is modified to Phosphotyrosine. A Phosphagen kinase C-terminal domain is found at 125–367 (YVLSSRVRTG…KLLIEMEQRL (243 aa)). Residues 128–132 (SSRVR), Arg130, Arg132, and His191 contribute to the ATP site. Residues 130-138 (RVRTGRSIR) are internal MTS-like signal. At Ser199 the chain carries Phosphoserine. Glu232 contacts creatine. ATP is bound at residue Arg236. The residue at position 269 (Tyr269) is a 3'-nitrotyrosine. Ser285 serves as a coordination point for creatine. ATP is bound at residue Arg292. Ser309 carries the post-translational modification Phosphoserine. Residues Arg320, 320–325 (RGTGGV), and Asp335 contribute to the ATP site. Thr322 carries the post-translational modification Phosphothreonine. Lys381 participates in a covalent cross-link: Glycyl lysine isopeptide (Lys-Gly) (interchain with G-Cter in ubiquitin).

It belongs to the ATP:guanido phosphotransferase family. As to quaternary structure, dimer of identical or non-identical chains, which can be either B (brain type) or M (muscle type). With MM being the major form in skeletal muscle and myocardium, MB existing in myocardium, and BB existing in many tissues, especially brain. Interacts with SLC12A6 (via C-terminus); the interaction may be required for SLC12A6 potassium-chloride cotransport activity. Post-translationally, ubiquitinated by the ECS(ASB9) complex, leading to its degradation by the proteasome.

It localises to the cytoplasm. It is found in the cytosol. Its subcellular location is the mitochondrion. The protein localises to the cell membrane. The enzyme catalyses creatine + ATP = N-phosphocreatine + ADP + H(+). Its function is as follows. Reversibly catalyzes the transfer of phosphate between ATP and various phosphogens (e.g. creatine phosphate). Creatine kinase isoenzymes play a central role in energy transduction in tissues with large, fluctuating energy demands, such as skeletal muscle, heart, brain and spermatozoa. Acts as a key regulator of adaptive thermogenesis as part of the futile creatine cycle: localizes to the mitochondria of thermogenic fat cells and acts by mediating phosphorylation of creatine to initiate a futile cycle of creatine phosphorylation and dephosphorylation. During the futile creatine cycle, creatine and N-phosphocreatine are in a futile cycle, which dissipates the high energy charge of N-phosphocreatine as heat without performing any mechanical or chemical work. This Oryctolagus cuniculus (Rabbit) protein is Creatine kinase B-type (CKB).